Reading from the N-terminus, the 730-residue chain is PWWP domain-containing protein 2A (730 aa).

Over residues 1-15 the composition is skewed to low complexity; sequence MAAVAAEAAATAASP. Residues 1-134 are disordered; that stretch reads MAAVAAEAAA…PPAGGDSAVS (134 aa). The segment covering 66-77 has biased composition (pro residues); it reads PLPPPPPPPPPG. Phosphoserine occurs at positions 82 and 99. Residues 91–108 are compositionally biased toward pro residues; it reads PEPAAVPVSPPEQPPAAP. The interval 128 to 346 is interaction with HDAC1 and MTA1; it reads GGDSAVSHLI…KLKTDHKVDG (219 aa). A Glycyl lysine isopeptide (Lys-Gly) (interchain with G-Cter in SUMO2) cross-link involves residue Lys188. Disordered stretches follow at residues 257–276, 311–355, and 409–531; these read YNQS…KRKM, IRKG…SQRR, and KEKA…LGKK. Positions 267-276 are enriched in basic residues; that stretch reads RKIKRPKRKM. 2 stretches are compositionally biased toward basic and acidic residues: residues 311-329 and 341-354; these read IRKG…RRND and DHKV…ESQR. An interaction with the H2A.Z/H2AZ1 region spans residues 396–547; the sequence is MDHAKAREVL…SVYLTLNQET (152 aa). Over residues 488–501 the composition is skewed to low complexity; it reads SAGEAPSEKPSPSE. The span at 512–527 shows a compositional bias: basic and acidic residues; the sequence is DTSRVRVPGEQEELRM. The PWWP domain occupies 630 to 690; it reads VGDIVWAKIY…LSQLSPFLEN (61 aa).

In terms of assembly, component of a MTA1-specific subcomplex of the NuRD complex (M1HR), which is composed of PWWP2A, MTA1/2, HDAC1/2, and RBBP4/7 but does not contain CHD4 and MBD3. Interacts with MTA1; the interaction mediates the association of PWWP2A with the M1HR complex. Interacts with H2A.Z/H2AZ1. Interacts (via PWWP domain) with histone H3 trimethylated at 'Lys-36' (H3K36me3). Does not interact with CHD4 and MBD3.

It localises to the nucleus. In terms of biological role, chromatin-binding protein that acts as an adapter between distinct nucleosome components (H3K36me3 or H2A.Z) and chromatin-modifying complexes, contributing to the regulation of the levels of histone acetylation at actively transcribed genes. Competes with CHD4 and MBD3 for interaction with MTA1 to form a NuRD subcomplex, preventing the formation of full NuRD complex (containing CHD4 and MBD3), leading to recruitment of HDACs to gene promoters resulting in turn in the deacetylation of nearby H3K27 and H2A.Z. Plays a role in facilitating transcriptional elongation and repression of spurious transcription initiation through regulation of histone acetylation. Essential for proper mitosis progression. This Mus musculus (Mouse) protein is PWWP domain-containing protein 2A (Pwwp2a).